The chain runs to 149 residues: Transcriptional repressor NrdR (149 aa).

The segment at Cys3–Cys34 is a zinc-finger region. The 91-residue stretch at Pro49–Ala139 folds into the ATP-cone domain.

Belongs to the NrdR family. Zn(2+) is required as a cofactor.

In terms of biological role, negatively regulates transcription of bacterial ribonucleotide reductase nrd genes and operons by binding to NrdR-boxes. The sequence is that of Transcriptional repressor NrdR from Ruthia magnifica subsp. Calyptogena magnifica.